Consider the following 893-residue polypeptide: Alanine--tRNA ligase (893 aa).

Positions 575, 579, 677, and 681 each coordinate Zn(2+).

It belongs to the class-II aminoacyl-tRNA synthetase family. Zn(2+) serves as cofactor.

It localises to the cytoplasm. It catalyses the reaction tRNA(Ala) + L-alanine + ATP = L-alanyl-tRNA(Ala) + AMP + diphosphate. Its function is as follows. Catalyzes the attachment of alanine to tRNA(Ala) in a two-step reaction: alanine is first activated by ATP to form Ala-AMP and then transferred to the acceptor end of tRNA(Ala). Also edits incorrectly charged Ser-tRNA(Ala) and Gly-tRNA(Ala) via its editing domain. This Synechococcus sp. (strain CC9311) protein is Alanine--tRNA ligase.